The following is a 924-amino-acid chain: Lon protease homolog 3, mitochondrial (924 aa).

Residues 1 to 63 (MMPKRFNTSG…PVQSLLLFRA (63 aa)) constitute a mitochondrion transit peptide. In terms of domain architecture, Lon N-terminal spans 112-325 (VIALPLPHKP…LTLELVKKQV (214 aa)). An ATP-binding site is contributed by 447-454 (GPPGVGKT). In terms of domain architecture, Lon proteolytic spans 738–922 (QTPVGVVMGL…EKIFDLAFNY (185 aa)). Residues Ser-828 and Lys-871 contribute to the active site.

Belongs to the peptidase S16 family. Homohexamer or homoheptamer. Organized in a ring with a central cavity.

It localises to the mitochondrion matrix. The catalysed reaction is Hydrolysis of proteins in presence of ATP.. Its function is as follows. ATP-dependent serine protease that mediates the selective degradation of misfolded, unassembled or oxidatively damaged polypeptides as well as certain short-lived regulatory proteins in the mitochondrial matrix. May also have a chaperone function in the assembly of inner membrane protein complexes. Participates in the regulation of mitochondrial gene expression and in the maintenance of the integrity of the mitochondrial genome. Binds to mitochondrial DNA in a site-specific manner. The polypeptide is Lon protease homolog 3, mitochondrial (LON3) (Arabidopsis thaliana (Mouse-ear cress)).